Here is a 555-residue protein sequence, read N- to C-terminus: Formate--tetrahydrofolate ligase (555 aa).

65-72 (TPAGEGKS) provides a ligand contact to ATP.

This sequence belongs to the formate--tetrahydrofolate ligase family.

It catalyses the reaction (6S)-5,6,7,8-tetrahydrofolate + formate + ATP = (6R)-10-formyltetrahydrofolate + ADP + phosphate. It participates in one-carbon metabolism; tetrahydrofolate interconversion. This Lactococcus lactis subsp. lactis (strain IL1403) (Streptococcus lactis) protein is Formate--tetrahydrofolate ligase.